A 120-amino-acid chain; its full sequence is Large ribosomal subunit protein bL12 (120 aa).

Positions 95–112 are enriched in basic and acidic residues; the sequence is KEGVSKEEAEEVQGKLEE. Positions 95–120 are disordered; sequence KEGVSKEEAEEVQGKLEEAGASVEVK.

The protein belongs to the bacterial ribosomal protein bL12 family. As to quaternary structure, homodimer. Part of the ribosomal stalk of the 50S ribosomal subunit. Forms a multimeric L10(L12)X complex, where L10 forms an elongated spine to which 2 to 4 L12 dimers bind in a sequential fashion. Binds GTP-bound translation factors.

Its function is as follows. Forms part of the ribosomal stalk which helps the ribosome interact with GTP-bound translation factors. Is thus essential for accurate translation. In Oceanobacillus iheyensis (strain DSM 14371 / CIP 107618 / JCM 11309 / KCTC 3954 / HTE831), this protein is Large ribosomal subunit protein bL12.